A 211-amino-acid chain; its full sequence is MELTDIRREYAKGGLRRKDLAADPIEQFNLWLEQAIEAKLTDPTAMTVATVDENGQPFQRIVLLKNVDKDGFVFYTNLGSRKAHQLEHNSKISLHFPWHPLERQVHITGTAEKLTAMENMKYFSSRPKESQLAAIASKQSSRISARGILEGKYLELKQKFAKGEIPVPSFWGGFRVRVDSIEFWQGGEHRLHDRFLFSRQDSRWDIDRLAP.

Residues 7 to 10 and lysine 65 each bind substrate; that span reads RREY. Residues 60 to 65, 75 to 76, arginine 81, lysine 82, and glutamine 104 each bind FMN; these read RIVLLK and YT. Substrate contacts are provided by tyrosine 122, arginine 126, and serine 130. Residues 139–140 and tryptophan 184 contribute to the FMN site; that span reads QS. Position 190–192 (190–192) interacts with substrate; it reads RLH. FMN is bound at residue arginine 194.

The protein belongs to the pyridoxamine 5'-phosphate oxidase family. Homodimer. Requires FMN as cofactor.

The enzyme catalyses pyridoxamine 5'-phosphate + O2 + H2O = pyridoxal 5'-phosphate + H2O2 + NH4(+). It carries out the reaction pyridoxine 5'-phosphate + O2 = pyridoxal 5'-phosphate + H2O2. It functions in the pathway cofactor metabolism; pyridoxal 5'-phosphate salvage; pyridoxal 5'-phosphate from pyridoxamine 5'-phosphate: step 1/1. The protein operates within cofactor metabolism; pyridoxal 5'-phosphate salvage; pyridoxal 5'-phosphate from pyridoxine 5'-phosphate: step 1/1. Its function is as follows. Catalyzes the oxidation of either pyridoxine 5'-phosphate (PNP) or pyridoxamine 5'-phosphate (PMP) into pyridoxal 5'-phosphate (PLP). The sequence is that of Pyridoxine/pyridoxamine 5'-phosphate oxidase from Vibrio atlanticus (strain LGP32) (Vibrio splendidus (strain Mel32)).